The following is a 325-amino-acid chain: Acetyl-coenzyme A carboxylase carboxyl transferase subunit beta (325 aa).

One can recognise a CoA carboxyltransferase N-terminal domain in the interval 24–293; that stretch reads LWIKCPDSGH…AEIEVVTPEP (270 aa).

Belongs to the AccD/PCCB family. In terms of assembly, acetyl-CoA carboxylase is a heterohexamer composed of biotin carboxyl carrier protein (AccB), biotin carboxylase (AccC) and two subunits each of ACCase subunit alpha (AccA) and ACCase subunit beta (AccD).

The protein resides in the cytoplasm. It catalyses the reaction N(6)-carboxybiotinyl-L-lysyl-[protein] + acetyl-CoA = N(6)-biotinyl-L-lysyl-[protein] + malonyl-CoA. The protein operates within lipid metabolism; malonyl-CoA biosynthesis; malonyl-CoA from acetyl-CoA: step 1/1. Component of the acetyl coenzyme A carboxylase (ACC) complex. Biotin carboxylase (BC) catalyzes the carboxylation of biotin on its carrier protein (BCCP) and then the CO(2) group is transferred by the transcarboxylase to acetyl-CoA to form malonyl-CoA. This chain is Acetyl-coenzyme A carboxylase carboxyl transferase subunit beta, found in Rhodopseudomonas palustris (strain BisA53).